We begin with the raw amino-acid sequence, 1775 residues long: Stereocilin (1775 aa).

The first 22 residues, 1–22, serve as a signal peptide directing secretion; the sequence is MALSLWPLLLLLLLLLLLSFAV. N-linked (GlcNAc...) asparagine glycans are attached at residues N65, N202, N297, N366, N427, N476, N540, N565, N656, N824, N916, N964, N1179, and N1274.

Belongs to the stereocilin family.

The protein resides in the cell surface. It localises to the cell projection. The protein localises to the kinocilium. It is found in the stereocilium. Essential to the formation of horizontal top connectors between outer hair cell stereocilia. The polypeptide is Stereocilin (STRC) (Homo sapiens (Human)).